A 339-amino-acid polypeptide reads, in one-letter code: Biotin synthase (339 aa).

Residues 55–282 (NAVQLSTLLS…KAVVRLSAGR (228 aa)) enclose the Radical SAM core domain. [4Fe-4S] cluster contacts are provided by cysteine 70, cysteine 74, and cysteine 77. Positions 114, 145, 205, and 277 each coordinate [2Fe-2S] cluster.

It belongs to the radical SAM superfamily. Biotin synthase family. Homodimer. [4Fe-4S] cluster is required as a cofactor. It depends on [2Fe-2S] cluster as a cofactor.

The enzyme catalyses (4R,5S)-dethiobiotin + (sulfur carrier)-SH + 2 reduced [2Fe-2S]-[ferredoxin] + 2 S-adenosyl-L-methionine = (sulfur carrier)-H + biotin + 2 5'-deoxyadenosine + 2 L-methionine + 2 oxidized [2Fe-2S]-[ferredoxin]. The protein operates within cofactor biosynthesis; biotin biosynthesis; biotin from 7,8-diaminononanoate: step 2/2. Catalyzes the conversion of dethiobiotin (DTB) to biotin by the insertion of a sulfur atom into dethiobiotin via a radical-based mechanism. This is Biotin synthase from Burkholderia cenocepacia (strain ATCC BAA-245 / DSM 16553 / LMG 16656 / NCTC 13227 / J2315 / CF5610) (Burkholderia cepacia (strain J2315)).